The following is a 156-amino-acid chain: Small ribosomal subunit protein uS7 (156 aa).

This sequence belongs to the universal ribosomal protein uS7 family. As to quaternary structure, part of the 30S ribosomal subunit. Contacts proteins S9 and S11.

Its function is as follows. One of the primary rRNA binding proteins, it binds directly to 16S rRNA where it nucleates assembly of the head domain of the 30S subunit. Is located at the subunit interface close to the decoding center, probably blocks exit of the E-site tRNA. The sequence is that of Small ribosomal subunit protein uS7 from Kocuria rhizophila (strain ATCC 9341 / DSM 348 / NBRC 103217 / DC2201).